The primary structure comprises 244 residues: MRIIVVDNYEKMSKKAAAMIASQVILKPDSVLGLATGDTPIGMYKEIIDIYKNEKMDFSKVRTFNLDEYYGLNRENPQSYYYYMMNNLFNHVNIDENNINIPNGMADNIEIECKEYERKIDKAGGIDLQILGIGVNGHIGFNEPNISFESETHLVNLNEKTIESNSRFFSSKEEVPTKAISMGIKSIIHSKKIILLACGSAKSDAVSKAINGKINPNIPASILQLHRDVVVIIDKEAASKLNLK.

Residue Asp-67 is the Proton acceptor; for enolization step of the active site. The active-site For ring-opening step is the Asn-136. The Proton acceptor; for ring-opening step role is filled by His-138. The active-site For ring-opening step is Glu-143.

It belongs to the glucosamine/galactosamine-6-phosphate isomerase family. NagB subfamily.

It carries out the reaction alpha-D-glucosamine 6-phosphate + H2O = beta-D-fructose 6-phosphate + NH4(+). It functions in the pathway amino-sugar metabolism; N-acetylneuraminate degradation; D-fructose 6-phosphate from N-acetylneuraminate: step 5/5. Catalyzes the reversible isomerization-deamination of glucosamine 6-phosphate (GlcN6P) to form fructose 6-phosphate (Fru6P) and ammonium ion. The chain is Glucosamine-6-phosphate deaminase from Clostridium botulinum (strain Loch Maree / Type A3).